The sequence spans 296 residues: Porphobilinogen deaminase (296 aa).

S-(dipyrrolylmethanemethyl)cysteine is present on Cys235.

Belongs to the HMBS family. Monomer. Dipyrromethane serves as cofactor.

The catalysed reaction is 4 porphobilinogen + H2O = hydroxymethylbilane + 4 NH4(+). It functions in the pathway porphyrin-containing compound metabolism; protoporphyrin-IX biosynthesis; coproporphyrinogen-III from 5-aminolevulinate: step 2/4. Functionally, tetrapolymerization of the monopyrrole PBG into the hydroxymethylbilane pre-uroporphyrinogen in several discrete steps. This is Porphobilinogen deaminase from Alkaliphilus oremlandii (strain OhILAs) (Clostridium oremlandii (strain OhILAs)).